Consider the following 40-residue polypeptide: MANTTGRIPLWIIGTVAGIVVIGLIGLFFYGSYSGLGSSL.

Residues Ile-8–Phe-28 traverse the membrane as a helical segment.

Belongs to the PsbJ family. In terms of assembly, PSII is composed of 1 copy each of membrane proteins PsbA, PsbB, PsbC, PsbD, PsbE, PsbF, PsbH, PsbI, PsbJ, PsbK, PsbL, PsbM, PsbT, PsbX, PsbY, PsbZ, Psb30/Ycf12, at least 3 peripheral proteins of the oxygen-evolving complex and a large number of cofactors. It forms dimeric complexes.

It is found in the plastid. Its subcellular location is the chloroplast thylakoid membrane. Its function is as follows. One of the components of the core complex of photosystem II (PSII). PSII is a light-driven water:plastoquinone oxidoreductase that uses light energy to abstract electrons from H(2)O, generating O(2) and a proton gradient subsequently used for ATP formation. It consists of a core antenna complex that captures photons, and an electron transfer chain that converts photonic excitation into a charge separation. This chain is Photosystem II reaction center protein J, found in Pisum sativum (Garden pea).